The following is an 84-amino-acid chain: Kunitz-type serine protease inhibitor B4 (84 aa).

The N-terminal stretch at 1–24 (MSSGGLLLLLGLLTLWAELTPISG) is a signal peptide. The 51-residue stretch at 31–81 (CNLAPESGRCRGHLRRIYYNLESNKCEVFFYGGCGGNDNNFSTWDECRHTC) folds into the BPTI/Kunitz inhibitor domain. 3 disulfide bridges follow: Cys31–Cys81, Cys40–Cys64, and Cys56–Cys77. Residue Asn70 is glycosylated (N-linked (GlcNAc...) asparagine).

This sequence belongs to the venom Kunitz-type family. In terms of tissue distribution, expressed by the venom gland.

It is found in the secreted. Functionally, serine protease inhibitor that inhibits plasmin and trypsin. The sequence is that of Kunitz-type serine protease inhibitor B4 from Daboia siamensis (Eastern Russel's viper).